A 424-amino-acid polypeptide reads, in one-letter code: ATP-sensitive inward rectifier potassium channel 8 (424 aa).

At 1-69 the chain is on the cytoplasmic side; the sequence is MLARKSIIPE…IFTTLVDLKW (69 aa). Ser6 is modified (phosphoserine). The chain crosses the membrane as a helical span at residues 70–94; the sequence is RHTLVIFTMSFLCSWLLFAIMWWLV. Over 95–126 the chain is Extracellular; the sequence is AFAHGDIYAYMEKGITEKSGLESAVCVTNVRS. Positions 127–138 form an intramembrane region, helical; Pore-forming; the sequence is FTSAFLFSIEVQ. The segment at residues 139–145 is an intramembrane region (pore-forming); the sequence is VTIGFGG. Positions 140 to 145 match the Selectivity filter motif; sequence TIGFGG. Residues 146–154 lie on the Extracellular side of the membrane; sequence RMMTEECPL. Residues 155 to 176 form a helical membrane-spanning segment; sequence AITVLILQNIVGLIINAVMLGC. Over 177–424 the chain is Cytoplasmic; that stretch reads IFMKTAQAHR…PEGNQCPSES (248 aa). Residues 374 to 424 are disordered; that stretch reads LSHQNSLRKRNSMRRNNSMRRSNSIRRNNSSLMVPKVQFMTPEGNQCPSES. Low complexity predominate over residues 387-404; the sequence is RRNNSMRRSNSIRRNNSS.

Belongs to the inward rectifier-type potassium channel (TC 1.A.2.1) family. KCNJ8 subfamily. In terms of assembly, interacts with ABCC9. Widely expressed, including in pancreatic islets, pituitary, skeletal muscle and heart.

Its subcellular location is the membrane. The catalysed reaction is K(+)(in) = K(+)(out). Inward rectifier potassium channels are characterized by a greater tendency to allow potassium to flow into the cell rather than out of it. Their voltage dependence is regulated by the concentration of extracellular potassium; as external potassium is raised, the voltage range of the channel opening shifts to more positive voltages. The inward rectification is mainly due to the blockage of outward current by internal magnesium. This channel is activated by internal ATP and can be blocked by external barium. Can form a sulfonyllurea-sensitive but ATP-insensitive potassium channel with ABCC9. This is ATP-sensitive inward rectifier potassium channel 8 (Kcnj8) from Rattus norvegicus (Rat).